We begin with the raw amino-acid sequence, 511 residues long: Kinesin-like protein 8 (511 aa).

Residues 5 to 356 (NVRVIVRVRP…LRYSEAARRI (352 aa)) form the Kinesin motor domain. Residue 107–114 (GQKGTGKT) participates in ATP binding. Phosphoserine occurs at positions 278, 279, 284, and 456. Residues 373–489 (EGELDDILTT…KLVKSQLHDY (117 aa)) adopt a coiled-coil conformation.

This sequence belongs to the TRAFAC class myosin-kinesin ATPase superfamily. Kinesin family.

The protein localises to the cytoplasm. Its subcellular location is the cytoskeleton. This Schizosaccharomyces pombe (strain 972 / ATCC 24843) (Fission yeast) protein is Kinesin-like protein 8 (klp8).